The chain runs to 121 residues: Large ribosomal subunit protein uL18 (121 aa).

This sequence belongs to the universal ribosomal protein uL18 family. In terms of assembly, part of the 50S ribosomal subunit; part of the 5S rRNA/L5/L18/L25 subcomplex. Contacts the 5S and 23S rRNAs.

Functionally, this is one of the proteins that bind and probably mediate the attachment of the 5S RNA into the large ribosomal subunit, where it forms part of the central protuberance. This Streptococcus suis (strain 98HAH33) protein is Large ribosomal subunit protein uL18.